The primary structure comprises 427 residues: Enolase (427 aa).

Residue Gln163 coordinates (2R)-2-phosphoglycerate. Residue Glu205 is the Proton donor of the active site. Residues Asp242, Glu285, and Asp312 each contribute to the Mg(2+) site. Residues Lys337, Arg366, Ser367, and Lys388 each coordinate (2R)-2-phosphoglycerate. Lys337 acts as the Proton acceptor in catalysis.

The protein belongs to the enolase family. The cofactor is Mg(2+).

It is found in the cytoplasm. The protein localises to the secreted. The protein resides in the cell surface. The enzyme catalyses (2R)-2-phosphoglycerate = phosphoenolpyruvate + H2O. It functions in the pathway carbohydrate degradation; glycolysis; pyruvate from D-glyceraldehyde 3-phosphate: step 4/5. In terms of biological role, catalyzes the reversible conversion of 2-phosphoglycerate (2-PG) into phosphoenolpyruvate (PEP). It is essential for the degradation of carbohydrates via glycolysis. The sequence is that of Enolase from Variovorax paradoxus (strain S110).